The chain runs to 319 residues: MTSQPQVRHFLADDDLTPAEQAEVLTLAAKLKAAPFSERPLEGPKSVAVLFDKTSTRTRFSFDAGIAHLGGHAIVVDSGSSQMGKGESLQDTAAVLSRYVEAIVWRTYAHSNFHAMAETSTVPLVNSLSDDLHPCQILADLQTIVENLSPEEGPAGLKGKKAVYLGDGDNNMANSYMIGFATAGMDISIIAPEGFQPRAEFVERAEKRGQETGAKVVVTDSLDEVAGADVVITDTWVSMGMENDGIDRTTPFVPYQVNDEVMAKANDGAIFLHCLPAYRGKEVAASVIDGPASKVFDEAENRLHAQKALLVWLLANQPR.

Carbamoyl phosphate is bound by residues 55–58 (STRT), Gln-82, Arg-106, and 133–136 (HPCQ). L-ornithine contacts are provided by residues Asn-171, Asp-234, and 238 to 239 (SM). Carbamoyl phosphate-binding positions include 274 to 275 (CL) and Arg-302.

The protein belongs to the aspartate/ornithine carbamoyltransferase superfamily. OTCase family.

The protein resides in the cytoplasm. It catalyses the reaction carbamoyl phosphate + L-ornithine = L-citrulline + phosphate + H(+). The protein operates within amino-acid biosynthesis; L-arginine biosynthesis; L-arginine from L-ornithine and carbamoyl phosphate: step 1/3. Reversibly catalyzes the transfer of the carbamoyl group from carbamoyl phosphate (CP) to the N(epsilon) atom of ornithine (ORN) to produce L-citrulline. In Corynebacterium glutamicum (strain ATCC 13032 / DSM 20300 / JCM 1318 / BCRC 11384 / CCUG 27702 / LMG 3730 / NBRC 12168 / NCIMB 10025 / NRRL B-2784 / 534), this protein is Ornithine carbamoyltransferase (argF).